A 700-amino-acid polypeptide reads, in one-letter code: Glycine--tRNA ligase beta subunit (700 aa).

It belongs to the class-II aminoacyl-tRNA synthetase family. Tetramer of two alpha and two beta subunits.

Its subcellular location is the cytoplasm. It carries out the reaction tRNA(Gly) + glycine + ATP = glycyl-tRNA(Gly) + AMP + diphosphate. This is Glycine--tRNA ligase beta subunit from Janthinobacterium sp. (strain Marseille) (Minibacterium massiliensis).